Here is a 155-residue protein sequence, read N- to C-terminus: Small ribosomal subunit protein uS7 (155 aa).

It belongs to the universal ribosomal protein uS7 family. As to quaternary structure, part of the 30S ribosomal subunit. Contacts proteins S9 and S11.

In terms of biological role, one of the primary rRNA binding proteins, it binds directly to 16S rRNA where it nucleates assembly of the head domain of the 30S subunit. Is located at the subunit interface close to the decoding center, probably blocks exit of the E-site tRNA. The chain is Small ribosomal subunit protein uS7 from Chlorobium limicola (strain DSM 245 / NBRC 103803 / 6330).